The chain runs to 121 residues: Large ribosomal subunit protein uL14 (121 aa).

This sequence belongs to the universal ribosomal protein uL14 family. Part of the 50S ribosomal subunit. Forms a cluster with proteins L3 and L19. In the 70S ribosome, L14 and L19 interact and together make contacts with the 16S rRNA in bridges B5 and B8.

Functionally, binds to 23S rRNA. Forms part of two intersubunit bridges in the 70S ribosome. This Prochlorococcus marinus (strain SARG / CCMP1375 / SS120) protein is Large ribosomal subunit protein uL14.